A 633-amino-acid polypeptide reads, in one-letter code: DNA topoisomerase 1 (633 aa).

One can recognise a Toprim domain in the interval 6–115; the sequence is KKYIVVESPA…KNRIVFSEIT (110 aa). Residues E12 and D84 each contribute to the Mg(2+) site. A Topo IA-type catalytic domain is found at 130-543; sequence DMKKVRAQLA…EFYESFSSVF (414 aa). The tract at residues 164–169 is interaction with DNA; it reads SAGRVQ. Y288 functions as the O-(5'-phospho-DNA)-tyrosine intermediate in the catalytic mechanism. Cystine bridges form between C559-C578 and C561-C580. Residues 559 to 580 form a C4-type zinc finger; it reads CSCGKEMRLSFGKYGFYLKCEC. The disordered stretch occupies residues 601-633; sequence LGRKDSESGSPDGRSVEGKGNLSEKRRKGKKGS.

The protein belongs to the type IA topoisomerase family. In terms of assembly, monomer. Mg(2+) is required as a cofactor.

It carries out the reaction ATP-independent breakage of single-stranded DNA, followed by passage and rejoining.. Its function is as follows. Releases the supercoiling and torsional tension of DNA, which is introduced during the DNA replication and transcription, by transiently cleaving and rejoining one strand of the DNA duplex. Introduces a single-strand break via transesterification at a target site in duplex DNA. The scissile phosphodiester is attacked by the catalytic tyrosine of the enzyme, resulting in the formation of a DNA-(5'-phosphotyrosyl)-enzyme intermediate and the expulsion of a 3'-OH DNA strand. The free DNA strand then undergoes passage around the unbroken strand, thus removing DNA supercoils. Finally, in the religation step, the DNA 3'-OH attacks the covalent intermediate to expel the active-site tyrosine and restore the DNA phosphodiester backbone. This is DNA topoisomerase 1 from Thermotoga maritima (strain ATCC 43589 / DSM 3109 / JCM 10099 / NBRC 100826 / MSB8).